The sequence spans 45 residues: Cytochrome b559 subunit beta (45 aa).

Residues 20 to 36 (WIAVHTLAVPTVFFLGA) form a helical membrane-spanning segment. Histidine 24 serves as a coordination point for heme.

This sequence belongs to the PsbE/PsbF family. Heterodimer of an alpha subunit and a beta subunit. PSII is composed of 1 copy each of membrane proteins PsbA, PsbB, PsbC, PsbD, PsbE, PsbF, PsbH, PsbI, PsbJ, PsbK, PsbL, PsbM, PsbT, PsbX, PsbY, PsbZ, Psb30/Ycf12, peripheral proteins PsbO, CyanoQ (PsbQ), PsbU, PsbV and a large number of cofactors. It forms dimeric complexes. The cofactor is heme b.

It localises to the cellular thylakoid membrane. Its function is as follows. This b-type cytochrome is tightly associated with the reaction center of photosystem II (PSII). PSII is a light-driven water:plastoquinone oxidoreductase that uses light energy to abstract electrons from H(2)O, generating O(2) and a proton gradient subsequently used for ATP formation. It consists of a core antenna complex that captures photons, and an electron transfer chain that converts photonic excitation into a charge separation. This Nostoc sp. (strain PCC 7120 / SAG 25.82 / UTEX 2576) protein is Cytochrome b559 subunit beta.